Consider the following 431-residue polypeptide: MNKLENPSQRDVAGPSPRHKTTQVMVGSIAVGGGAPIVVQSMTNTDTADVEGTIAQVAALSRAGSEMVRITVDRDEAAAAVPHIRDGLRKRGIATPLIGDFHYIGHKLLADHPACAEALDKYRINPGNVGFKDKRDKQFTDIVEMAIKYGKAVRIGANWGSLDQELLTHLMEENANSAAPLEARAVTREAMVQSALLSAKRAEEIGLPKNRMILSAKVSAVQDLIAVYQTLASRSDYAIHLGLTEAGMGSKGIVASSAALGILLQQGIGDTIRISLTPEPGGDRTREVQVAQELLQTMGFRTFVPLVAACPGCGRTTSTTFQELARSIQDFIRDEMPGWKTQYPGVEQLNVAVMGCIVNGPGESKHADIGISLPGTGEAPAAPVFVDGKKFRTLRGPAIAQDFKALVIDYIDQRYGSGGKTPTDATTAAAE.

The disordered stretch occupies residues 1–21 (MNKLENPSQRDVAGPSPRHKT). [4Fe-4S] cluster is bound by residues C310, C313, C356, and E363.

The protein belongs to the IspG family. The cofactor is [4Fe-4S] cluster.

The catalysed reaction is (2E)-4-hydroxy-3-methylbut-2-enyl diphosphate + oxidized [flavodoxin] + H2O + 2 H(+) = 2-C-methyl-D-erythritol 2,4-cyclic diphosphate + reduced [flavodoxin]. Its pathway is isoprenoid biosynthesis; isopentenyl diphosphate biosynthesis via DXP pathway; isopentenyl diphosphate from 1-deoxy-D-xylulose 5-phosphate: step 5/6. In terms of biological role, converts 2C-methyl-D-erythritol 2,4-cyclodiphosphate (ME-2,4cPP) into 1-hydroxy-2-methyl-2-(E)-butenyl 4-diphosphate. The polypeptide is 4-hydroxy-3-methylbut-2-en-1-yl diphosphate synthase (flavodoxin) (Nitrobacter hamburgensis (strain DSM 10229 / NCIMB 13809 / X14)).